The sequence spans 934 residues: Diacylglycerol kinase theta (934 aa).

A disordered region spans residues 1–50 (MAAAAEPGARTWPGSGSPRLGSPAGSPVLGISGRTRPGSGPERTSRAIGS). Ser-22 and Ser-26 each carry phosphoserine. 3 Phorbol-ester/DAG-type zinc fingers span residues 54-102 (GHSF…KTPC), 115-162 (AHCF…CSDC), and 177-228 (HHHW…APEC). Residues 387–486 (TQEILKIYPG…TRFYVAETRA (100 aa)) form the Ras-associating domain. 2 short sequence motifs (LXXLL motif) span residues 547–551 (LYMLA) and 566–570 (LPDVL). The 138-residue stretch at 576-713 (PDCCPLLVFV…MDRWTILLDA (138 aa)) folds into the DAGKc domain. Residues 905-916 (LRKAKQKPRKAG) are compositionally biased toward basic residues. Positions 905-934 (LRKAKQKPRKAGANRDTRVDTLPAPEGNPL) are disordered.

The protein belongs to the eukaryotic diacylglycerol kinase family. In terms of assembly, interacts with RHOA (constitutively activated, GTP-bound); the interaction inhibits DGKQ. Interacts with PRKCE. Interacts with PRKCH. Interacts with PLCB1. Interacts with NR5A1; the interaction requires both LXXLL motifs in DGKQ and is required for full phosphatidic acid-mediated activation of NR5A1. Phosphorylated by PRKCE and PRKCH in vitro. Widely expressed in all brain regions, including the cortex and hippocampus with a specific expression in neuronal cells (at protein level).

It is found in the cytoplasm. The protein localises to the cytosol. It localises to the cell membrane. The protein resides in the synapse. Its subcellular location is the cytoskeleton. It is found in the nucleus. The protein localises to the nucleus speckle. It localises to the nucleus matrix. The catalysed reaction is a 1,2-diacyl-sn-glycerol + ATP = a 1,2-diacyl-sn-glycero-3-phosphate + ADP + H(+). The enzyme catalyses a 1-O-alkyl-sn-glycerol + ATP = a 1-O-alkyl-sn-glycero-3-phosphate + ADP + H(+). It carries out the reaction 1-O-alkyl-2-acyl-sn-glycerol + ATP = 1-O-alkyl-2-acyl-sn-glycero-3-phosphate + ADP + H(+). It catalyses the reaction 1,2-di-(9Z-octadecenoyl)-sn-glycerol + ATP = 1,2-di-(9Z-octadecenoyl)-sn-glycero-3-phosphate + ADP + H(+). The catalysed reaction is 1-O-hexadecyl-sn-glycerol + ATP = 1-O-hexadecyl-sn-glycero-3-phosphate + ADP + H(+). The enzyme catalyses 1-O-hexadecyl-2-acetyl-sn-glycerol + ATP = 1-O-hexadecyl-2-acetyl-sn-glycero-3-phosphate + ADP + H(+). It carries out the reaction 1-octadecanoyl-2-(5Z,8Z,11Z,14Z-eicosatetraenoyl)-sn-glycerol + ATP = 1-octadecanoyl-2-(5Z,8Z,11Z,14Z-eicosatetraenoyl)-sn-glycero-3-phosphate + ADP + H(+). Its pathway is lipid metabolism; glycerolipid metabolism. Its activity is regulated as follows. Activated by phosphatidylserine. In terms of biological role, diacylglycerol kinase that converts diacylglycerol/DAG into phosphatidic acid/phosphatidate/PA and regulates the respective levels of these two bioactive lipids. Thereby, acts as a central switch between the signaling pathways activated by these second messengers with different cellular targets and opposite effects in numerous biological processes. Within the adrenocorticotropic hormone signaling pathway, produces phosphatidic acid which in turn activates NR5A1 and subsequent steroidogenic gene transcription. Also functions downstream of the nerve growth factor signaling pathway being specifically activated in the nucleus by the growth factor. Through its diacylglycerol activity also regulates synaptic vesicle endocytosis. The sequence is that of Diacylglycerol kinase theta (Dgkq) from Mus musculus (Mouse).